A 71-amino-acid chain; its full sequence is Small ribosomal subunit protein bS21 (71 aa).

Residues 48-59 show a composition bias toward basic residues; it reads EKASLAKRHAKR. A disordered region spans residues 48 to 71; it reads EKASLAKRHAKRNARENARNTRLY. Basic and acidic residues predominate over residues 60 to 71; that stretch reads NARENARNTRLY.

The protein belongs to the bacterial ribosomal protein bS21 family.

This is Small ribosomal subunit protein bS21 from Actinobacillus pleuropneumoniae serotype 5b (strain L20).